Consider the following 432-residue polypeptide: 3-phosphoshikimate 1-carboxyvinyltransferase (432 aa).

The 3-phosphoshikimate site is built by Lys-22, Ser-23, and Arg-27. Lys-22 serves as a coordination point for phosphoenolpyruvate. Phosphoenolpyruvate-binding residues include Gly-96 and Arg-127. 3-phosphoshikimate contacts are provided by Ser-173, Ser-174, Gln-175, Ser-201, Asp-316, Asn-339, and Lys-343. Residue Gln-175 coordinates phosphoenolpyruvate. Residue Asp-316 is the Proton acceptor of the active site. Phosphoenolpyruvate is bound by residues Arg-347, Arg-391, and Lys-416.

This sequence belongs to the EPSP synthase family. As to quaternary structure, monomer.

It localises to the cytoplasm. It catalyses the reaction 3-phosphoshikimate + phosphoenolpyruvate = 5-O-(1-carboxyvinyl)-3-phosphoshikimate + phosphate. The protein operates within metabolic intermediate biosynthesis; chorismate biosynthesis; chorismate from D-erythrose 4-phosphate and phosphoenolpyruvate: step 6/7. Functionally, catalyzes the transfer of the enolpyruvyl moiety of phosphoenolpyruvate (PEP) to the 5-hydroxyl of shikimate-3-phosphate (S3P) to produce enolpyruvyl shikimate-3-phosphate and inorganic phosphate. This chain is 3-phosphoshikimate 1-carboxyvinyltransferase, found in Haemophilus influenzae (strain PittGG).